We begin with the raw amino-acid sequence, 147 residues long: Large ribosomal subunit protein uL15 (147 aa).

A disordered region spans residues 1–58; sequence MRLHDLKPAEGSTKKKKRVGRGIGSGHGKTSGRGHKGQNARSGGGVRPGFEGGQMPLT. A compositionally biased stretch (gly residues) spans 42 to 52; sequence SGGGVRPGFEG.

It belongs to the universal ribosomal protein uL15 family. As to quaternary structure, part of the 50S ribosomal subunit.

Functionally, binds to the 23S rRNA. This chain is Large ribosomal subunit protein uL15, found in Caldanaerobacter subterraneus subsp. tengcongensis (strain DSM 15242 / JCM 11007 / NBRC 100824 / MB4) (Thermoanaerobacter tengcongensis).